The chain runs to 254 residues: Alcohol dehydrogenase 1 (254 aa).

NAD(+) is bound at residue 10 to 33; the sequence is FVAGLGGIGFDTSREIVKSGPKNL. Ser138 serves as a coordination point for substrate. Catalysis depends on Tyr151, which acts as the Proton acceptor.

It belongs to the short-chain dehydrogenases/reductases (SDR) family. Homodimer.

It catalyses the reaction a primary alcohol + NAD(+) = an aldehyde + NADH + H(+). The catalysed reaction is a secondary alcohol + NAD(+) = a ketone + NADH + H(+). The chain is Alcohol dehydrogenase 1 (Adh1) from Drosophila navojoa (Fruit fly).